Consider the following 122-residue polypeptide: MIYGTGIDITDLKRVQRVVERQPRFLTKVLTPNERVDYQKLSGQRALEFIAGRWSAKESYSKAMGTGIGATVTFQDIEIRDNDAGRPVVRRQPFGGIAHVSISHTETVVMTQVILERGNESW.

2 residues coordinate Mg(2+): Asp8 and Glu58.

Belongs to the P-Pant transferase superfamily. AcpS family. Mg(2+) is required as a cofactor.

It localises to the cytoplasm. It carries out the reaction apo-[ACP] + CoA = holo-[ACP] + adenosine 3',5'-bisphosphate + H(+). In terms of biological role, transfers the 4'-phosphopantetheine moiety from coenzyme A to a Ser of acyl-carrier-protein. This is Holo-[acyl-carrier-protein] synthase from Levilactobacillus brevis (strain ATCC 367 / BCRC 12310 / CIP 105137 / JCM 1170 / LMG 11437 / NCIMB 947 / NCTC 947) (Lactobacillus brevis).